The chain runs to 426 residues: Dihydroorotase (426 aa).

Zn(2+) is bound by residues His-58 and His-60. Substrate is bound by residues 60–62 (HLR) and Asn-92. Residues Asp-150, His-177, and His-230 each contribute to the Zn(2+) site. Asn-276 lines the substrate pocket. A Zn(2+)-binding site is contributed by Asp-303. Residue Asp-303 is part of the active site. Substrate is bound by residues His-307 and 321 to 322 (FG).

Belongs to the metallo-dependent hydrolases superfamily. DHOase family. Class I DHOase subfamily. Zn(2+) is required as a cofactor.

It carries out the reaction (S)-dihydroorotate + H2O = N-carbamoyl-L-aspartate + H(+). It participates in pyrimidine metabolism; UMP biosynthesis via de novo pathway; (S)-dihydroorotate from bicarbonate: step 3/3. Functionally, catalyzes the reversible cyclization of carbamoyl aspartate to dihydroorotate. The chain is Dihydroorotase from Listeria monocytogenes serotype 4b (strain F2365).